Reading from the N-terminus, the 294-residue chain is Protein CHLOROPLAST J-LIKE DOMAIN 1, chloroplastic (294 aa).

A chloroplast-targeting transit peptide spans 1–58 (MAPALSTSCSSVMAFSTSNALRYHHPQISLRNSLRAPKSPSFVRLPLGKVLQSRIVIR). Over 59–164 (AASSAAGNPQ…GPRFSRSSKN (106 aa)) the chain is Stromal. The tract at residues 74–152 (NPYEVLGVNP…IKYADKQPII (79 aa)) is J-like domain. A helical membrane pass occupies residues 165–182 (DMLINLAISVVFSAWIAI). The Chloroplast intermembrane portion of the chain corresponds to 183–233 (KRNVEYKPLQFMSFVFVYRIFEKLKSFEAPSSPIYNEEGEESGRGLRMGKR). A helical transmembrane segment spans residues 234–256 (LLRSLSLVFGSILLASLAYTGFL). Over 257–275 (NGIEYMGYSIPMVLYNNQE) the chain is Stromal. Residues 276–293 (LIVTASSAFMLYVIASFY) traverse the membrane as a helical segment. Arginine 294 is a topological domain (chloroplast intermembrane).

Interacts (via J-like domain) with ARC6 (via J domain).

The protein localises to the plastid. It localises to the chloroplast inner membrane. Probably involved in the regulation of the fatty acid metabolic process in chloroplasts, especially chloroplastic galactolipids monogalactosyldiacylglycerol (MGDG) and digalactosyldiacylglycerol (DGDG). The protein is Protein CHLOROPLAST J-LIKE DOMAIN 1, chloroplastic of Arabidopsis thaliana (Mouse-ear cress).